The sequence spans 403 residues: MEFDRMLIRYGELSTKGKNRKQFVTKLAQNVKRAMTDLPEVRIHGERDRMYIILNGADYQLAEERLKPIFGIQSFSPAVRVNLDVEEVKAAALALVQDAHEENGTFKVAARRSHREFPLDSNEINQEIGAYVLQNMEDLTVNVKNPDVKLTIDVRKEGVFLSCRTILGAAGLPVGSSGRAMLMLSGGIDSPVAGYLAQKRGVEIEAVHFHSPPYTSEQAKQKAIDLAAKLAKYSGQVQMHIVPFTEIQEVIKQQIPESVIMTVTRRMMLRITDELRRKRNGLAIVNGESLGQVASQTLESMLAINAVTATPIIRPVVSMDKNEIIQIAQKIDTYNLSVQPFEDCCTIFTPPSPKTKPKLDKIEHYESFTDFDALIAKALDNIETISVNVAETAQVKDEFADLF.

Residues 60–165 (QLAEERLKPI…KEGVFLSCRT (106 aa)) enclose the THUMP domain. ATP-binding positions include 183–184 (ML), 208–209 (HF), R265, G287, and Q296.

Belongs to the ThiI family.

It localises to the cytoplasm. The enzyme catalyses [ThiI sulfur-carrier protein]-S-sulfanyl-L-cysteine + a uridine in tRNA + 2 reduced [2Fe-2S]-[ferredoxin] + ATP + H(+) = [ThiI sulfur-carrier protein]-L-cysteine + a 4-thiouridine in tRNA + 2 oxidized [2Fe-2S]-[ferredoxin] + AMP + diphosphate. It catalyses the reaction [ThiS sulfur-carrier protein]-C-terminal Gly-Gly-AMP + S-sulfanyl-L-cysteinyl-[cysteine desulfurase] + AH2 = [ThiS sulfur-carrier protein]-C-terminal-Gly-aminoethanethioate + L-cysteinyl-[cysteine desulfurase] + A + AMP + 2 H(+). It participates in cofactor biosynthesis; thiamine diphosphate biosynthesis. Catalyzes the ATP-dependent transfer of a sulfur to tRNA to produce 4-thiouridine in position 8 of tRNAs, which functions as a near-UV photosensor. Also catalyzes the transfer of sulfur to the sulfur carrier protein ThiS, forming ThiS-thiocarboxylate. This is a step in the synthesis of thiazole, in the thiamine biosynthesis pathway. The sulfur is donated as persulfide by IscS. The protein is Probable tRNA sulfurtransferase of Listeria monocytogenes serovar 1/2a (strain ATCC BAA-679 / EGD-e).